The chain runs to 85 residues: Alpha-defensin 14 (85 aa).

The N-terminal stretch at 1–11 is a signal peptide; it reads ALVLLAFQVQA. The propeptide occupies 12–50; the sequence is DPIQNTDEETKTEEQPGEDDQAVSVSFGDPEGSSLQEES. The interval 13–48 is disordered; sequence PIQNTDEETKTEEQPGEDDQAVSVSFGDPEGSSLQE. 3 disulfides stabilise this stretch: cysteine 56/cysteine 84, cysteine 58/cysteine 73, and cysteine 63/cysteine 83.

The protein belongs to the alpha-defensin family. In terms of tissue distribution, paneth cells of the small bowel.

The protein localises to the secreted. Probably contributes to the antimicrobial barrier function of the small bowel mucosa. The chain is Alpha-defensin 14 (Defa14) from Mus musculus (Mouse).